The chain runs to 860 residues: Leucine--tRNA ligase (860 aa).

The 'HIGH' region signature appears at 42–52 (PYPSGRLHMGH). A 'KMSKS' region motif is present at residues 619 to 623 (KMSKS). Lys-622 contacts ATP.

It belongs to the class-I aminoacyl-tRNA synthetase family.

The protein resides in the cytoplasm. The enzyme catalyses tRNA(Leu) + L-leucine + ATP = L-leucyl-tRNA(Leu) + AMP + diphosphate. This chain is Leucine--tRNA ligase, found in Serratia proteamaculans (strain 568).